The following is a 110-amino-acid chain: Parvalbumin alpha (110 aa).

At Ser2 the chain carries N-acetylserine. Phosphoserine is present on residues Ser2 and Ser24. EF-hand domains follow at residues 39–74 (KSAD…FSPD) and 78–110 (LSAK…VAES). Asp52, Asp54, Ser56, Phe58, Glu60, Glu63, Asp91, Asp93, Asp95, Lys97, and Glu102 together coordinate Ca(2+).

In terms of biological role, in muscle, parvalbumin is thought to be involved in relaxation after contraction. It binds two calcium ions. This chain is Parvalbumin alpha (PVALB), found in Homo sapiens (Human).